Here is a 965-residue protein sequence, read N- to C-terminus: Translation initiation factor IF-2 (965 aa).

The segment at 94–375 (RTFVRRDEAA…RGKHQESTTF (282 aa)) is disordered. Over residues 104–115 (EQAAEATGNGQE) the composition is skewed to low complexity. Positions 121-177 (ELQRREEEARHEAELLEKQAQELKARQEQLAREEAERQAREQAAEAERRRAEEEAAK) are enriched in basic and acidic residues. A compositionally biased stretch (low complexity) spans 181 to 191 (AAVAEAAAAAR). Positions 192–253 (EQAEQERASQ…KAEAEARAIR (62 aa)) are enriched in basic and acidic residues. Residues 267–276 (PEPPPKPAEA) are compositionally biased toward pro residues. The span at 303–320 (KKPAPAAAAQPAATTQPA) shows a compositional bias: low complexity. Gly residues predominate over residues 351-364 (TSGGVDRGWRGGPK). Positions 465–634 (PRPPVVTVMG…LLQAEVLELK (170 aa)) constitute a tr-type G domain. Residues 474–481 (GHVDHGKT) form a G1 region. 474–481 (GHVDHGKT) serves as a coordination point for GTP. A G2 region spans residues 499 to 503 (GITQH). A G3 region spans residues 520 to 523 (DTPG). GTP is bound by residues 520–524 (DTPGH) and 574–577 (NKID). A G4 region spans residues 574–577 (NKID). A G5 region spans residues 610–612 (SAK).

It belongs to the TRAFAC class translation factor GTPase superfamily. Classic translation factor GTPase family. IF-2 subfamily.

The protein localises to the cytoplasm. Functionally, one of the essential components for the initiation of protein synthesis. Protects formylmethionyl-tRNA from spontaneous hydrolysis and promotes its binding to the 30S ribosomal subunits. Also involved in the hydrolysis of GTP during the formation of the 70S ribosomal complex. The sequence is that of Translation initiation factor IF-2 from Paraburkholderia phymatum (strain DSM 17167 / CIP 108236 / LMG 21445 / STM815) (Burkholderia phymatum).